Reading from the N-terminus, the 127-residue chain is Protein NEGATIVE REGULATOR OF RESISTANCE (127 aa).

2 disordered regions span residues 1–28 (MDATTTAKRKRPAASDIADDAPTTVDEV) and 47–127 (TRRL…RAPA). Over residues 112–127 (PPSDAPATPRSARAPA) the composition is skewed to low complexity.

The protein belongs to the NPR1-interactor family. Interacts with NPR1/NH1. Interacts with NPR3/NH3.

The protein localises to the nucleus. Acts as a negative regulator of disease resistance. Acts on basal resistance, age-related resistance and resistance mediated by the LRR receptor kinase XA21. Plants over-expressing NRR display enhanced susceptibility to the bacterial blight Xanthomonas oryzae pv. oryzae (Xoo). Binds to and represses NPR1/NH1-mediated transcriptional activation of LG2 in vitro. This is Protein NEGATIVE REGULATOR OF RESISTANCE from Oryza sativa subsp. japonica (Rice).